The sequence spans 86 residues: Cell division topological specificity factor (86 aa).

The protein belongs to the MinE family.

Prevents the cell division inhibition by proteins MinC and MinD at internal division sites while permitting inhibition at polar sites. This ensures cell division at the proper site by restricting the formation of a division septum at the midpoint of the long axis of the cell. The polypeptide is Cell division topological specificity factor (Shewanella loihica (strain ATCC BAA-1088 / PV-4)).